Here is a 176-residue protein sequence, read N- to C-terminus: uncharacterized protein (176 aa).

This is an uncharacterized protein from Treponema pallidum (strain Nichols).